A 341-amino-acid polypeptide reads, in one-letter code: Coiled-coil domain-containing protein 86 (341 aa).

Positions 1 to 341 (MGTPLRRSRR…QPPQRPVAKV (341 aa)) are disordered. A Phosphoserine modification is found at serine 18. The span at 26–49 (EVSRAKRALVDFKSNPEETRELES) shows a compositional bias: basic and acidic residues. Serine 59 bears the Phosphoserine mark. Low complexity predominate over residues 64 to 73 (PETSPESPCP). Threonine 66 is subject to Phosphothreonine. Serine 67, serine 70, serine 81, serine 92, serine 103, serine 114, and serine 124 each carry phosphoserine. Positions 105–114 (AGQTESNPES) are enriched in polar residues. The segment covering 130–139 (EVAHAKEEVI) has biased composition (basic and acidic residues). Residues serine 142, serine 169, serine 170, and serine 200 each carry the phosphoserine modification. Over residues 219-235 (GKPKSGRVWKDRSKKRF) the composition is skewed to basic residues. The segment covering 254 to 298 (ERQERKLAKDFARHLEEEKQRRRQEKKERRAENLRRRLENERKAE) has biased composition (basic and acidic residues). Positions 261 to 304 (AKDFARHLEEEKQRRRQEKKERRAENLRRRLENERKAEIVQVIR) form a coiled coil. Basic residues predominate over residues 307–317 (AKLKKAKKKQL). A Citrulline modification is found at arginine 323.

Post-translationally, citrullinated by PADI4.

The protein localises to the nucleus. It localises to the chromosome. Its subcellular location is the nucleolus. Its function is as follows. Required for proper chromosome segregation during mitosis and error-free mitotic progression. In Rattus norvegicus (Rat), this protein is Coiled-coil domain-containing protein 86.